A 142-amino-acid polypeptide reads, in one-letter code: Protein archease (142 aa).

Aspartate 12, aspartate 141, and isoleucine 142 together coordinate Ca(2+).

This sequence belongs to the archease family.

In terms of biological role, activates the tRNA-splicing ligase complex by facilitating the enzymatic turnover of catalytic subunit RtcB. Acts by promoting the guanylylation of RtcB, a key intermediate step in tRNA ligation. Can also alter the NTP specificity of RtcB such that ATP, dGTP or ITP is used efficiently. This is Protein archease from Pyrococcus furiosus (strain ATCC 43587 / DSM 3638 / JCM 8422 / Vc1).